Reading from the N-terminus, the 142-residue chain is MENLCIKDILQILPHRYPMLLIDKVETVEPGKKIVAYKNVTFNEGFFRGHFPHEPVMPGVLIIEALAQAGAIAVLSLDEFKGKIPYFAGINKAKFRKKVIPGDTLKLEVEMIKLRGSAGIGKGIAKVNEKVVAEAEIMFMIG.

Residue His-50 is part of the active site.

Belongs to the thioester dehydratase family. FabZ subfamily.

Its subcellular location is the cytoplasm. The catalysed reaction is a (3R)-hydroxyacyl-[ACP] = a (2E)-enoyl-[ACP] + H2O. In terms of biological role, involved in unsaturated fatty acids biosynthesis. Catalyzes the dehydration of short chain beta-hydroxyacyl-ACPs and long chain saturated and unsaturated beta-hydroxyacyl-ACPs. This chain is 3-hydroxyacyl-[acyl-carrier-protein] dehydratase FabZ, found in Clostridium tetani (strain Massachusetts / E88).